The chain runs to 446 residues: COBRA-like protein 1 (446 aa).

Residues 1 to 28 (MALLLLRMGVSVALLVAFFSSLIPSSEA) form the signal peptide. Residues Asn-37, Asn-162, Asn-170, Asn-209, Asn-234, Asn-316, Asn-331, Asn-350, and Asn-419 are each glycosylated (N-linked (GlcNAc...) asparagine). Residue Ala-420 is the site of GPI-anchor amidated alanine attachment. A propeptide spans 421–446 (STRVMSSILLPFITIWTALTFLMVYA) (removed in mature form).

This sequence belongs to the COBRA family.

It is found in the cell membrane. In terms of biological role, involved in determining the orientation of cell expansion, probably by playing an important role in cellulose deposition. May act by recruiting cellulose synthesizing complexes to discrete positions on the cell surface. The protein is COBRA-like protein 1 (BC1L6) of Oryza sativa subsp. japonica (Rice).